Reading from the N-terminus, the 236-residue chain is Probable ascorbate-specific transmembrane electron transporter 2 (236 aa).

Residues 1–11 (MAAGLGVKAAP) lie on the Cytoplasmic side of the membrane. The chain crosses the membrane as a helical span at residues 12–32 (FTYVAHALAVAAAVMVLVWCI). Positions 15–219 (VAHALAVAAA…FGAAVVVAAV (205 aa)) constitute a Cytochrome b561 domain. Residues 33–53 (SFRGGLAFEADNKNLIFNVHP) lie on the Extracellular side of the membrane. His-52 contributes to the heme b binding site. The chain crosses the membrane as a helical span at residues 54–74 (VLMLIGYIILGSEAIMIYKIF). An L-ascorbate-binding site is contributed by 67–75 (AIMIYKIFP). The Cytoplasmic segment spans residues 75–84 (PKLNHDTTKL). Residues 85 to 105 (IHLILHAIAIVLGAVGIYCAF) form a helical membrane-spanning segment. His-86 and His-120 together coordinate heme b. The Extracellular portion of the chain corresponds to 106–122 (KFHNESGIANLYSLHSW). Residue 116–125 (LYSLHSWLGI) coordinates monodehydro-L-ascorbate radical. Residues 123-143 (LGIGTISLYGIQWIFGFVAFF) form a helical membrane-spanning segment. The Cytoplasmic segment spans residues 144-153 (YPGAAPHVRR). The chain crosses the membrane as a helical span at residues 154-174 (GALPWHVLFGLFVYVLTLATA). Residue His-159 participates in heme b binding. The Extracellular portion of the chain corresponds to 175–196 (ELGLLEKLTFLQSSGLDKYGAE). Residues 197-217 (AFLVNFTGLVVALFGAAVVVA) traverse the membrane as a helical segment. At 218–236 (AVAPAHVEEPEGYAPIPVN) the chain is on the cytoplasmic side.

The cofactor is heme b.

The protein resides in the membrane. Functionally, two-heme-containing cytochrome. Catalyzes ascorbate-dependent trans-membrane electron transfer by utilizing a concerted H(+)/e(-) transfer mechanism. This chain is Probable ascorbate-specific transmembrane electron transporter 2, found in Oryza sativa subsp. japonica (Rice).